Here is a 440-residue protein sequence, read N- to C-terminus: Sequestosome-1 (440 aa).

An N-acetylalanine modification is found at alanine 2. Residues 2-50 (ASLTVKAYLLGKEDAAREIRRFSFCCSPEPEAEAEAAAGPGPCERLLSR) form an interaction with LCK region. In terms of domain architecture, PB1 spans 3–102 (SLTVKAYLLG…DIFRIYIKEK (100 aa)). Serine 24 carries the post-translational modification Phosphoserine. Residues 43–107 (PCERLLSRVA…YIKEKKECRR (65 aa)) are interaction with PRKCZ and dimerization. The interval 50 to 80 (RVAALFPALRPGGFQAHYRDEDGDLVAFSSD) is interaction with PAWR. Lysine 91 participates in a covalent cross-link: Glycyl lysine isopeptide (Lys-Gly) (interchain with G-Cter in ubiquitin). Positions 122-224 (VHPNVICDGC…EARPGPTAES (103 aa)) are interaction with GABRR3. The ZZ-type zinc-finger motif lies at 123-173 (HPNVICDGCNGPVVGTRYKCSVCPDYDLCSVCEGKGLHRGHTKLAFPSPFG). Zn(2+) contacts are provided by cysteine 128, cysteine 131, cysteine 142, and cysteine 145. Tyrosine 148 carries the post-translational modification Phosphotyrosine. 4 residues coordinate Zn(2+): cysteine 151, cysteine 154, histidine 160, and histidine 163. 2 positions are modified to phosphoserine: serine 170 and serine 176. The interval 170 to 220 (SPFGHLSEGFSHSRWLRKVKHGHFGWPGWEMGPPGNWSPRPPRAGEARPGP) is LIM protein-binding (LB). Residue lysine 189 forms a Glycyl lysine isopeptide (Lys-Gly) (interchain with G-Cter in ubiquitin) linkage. The segment at 196-235 (PGWEMGPPGNWSPRPPRAGEARPGPTAESASGPSEDPSVN) is disordered. Phosphoserine occurs at positions 207, 233, 249, and 266. Residues 228 to 233 (PSEDPS) carry the TRAF6-binding motif. The interval 264–390 (KRSRLTPVSP…ALYPHLPPEA (127 aa)) is disordered. Threonine 269 is subject to Phosphothreonine. An interaction with NTRK1 region spans residues 269 to 440 (TPVSPESSST…IQYSKHPPPL (172 aa)). Residues serine 272 and serine 282 each carry the phosphoserine modification. Residues 283 to 296 (SSQPSSCCSDPSKP) show a composition bias toward low complexity. Residues cysteine 289 and cysteine 290 are each lipidated (S-palmitoyl cysteine). Position 306 is a phosphoserine (serine 306). Positions 310 to 324 (QMRKIALESEGRPEE) are enriched in basic and acidic residues. Positions 321–342 (RPEEQMESDNCSGGDDDWTHLS) are MAP1LC3B-binding. Phosphoserine is present on residues serine 328 and serine 332. The LIR motif lies at 336–341 (DDWTHL). A compositionally biased stretch (basic and acidic residues) spans 337-347 (DWTHLSSKEVD). An interaction with KEAP1 region spans residues 347–352 (DPSTGE). At serine 349 the chain carries Phosphoserine; by ULK1. Residues 351–373 (GELQSLQMPESEGPSSLDPSQEG) are compositionally biased toward polar residues. A phosphoserine mark is found at serine 355, serine 361, serine 365, and serine 366. Residues 389–434 (EADPRLIESLSQMLSMGFSDEGGWLTRLLQTKNYDIGAALDTIQYS) form the UBA domain. Position 403 is a phosphoserine; by CK2, ULK1 and TBK1 (serine 403). A Phosphoserine; by ULK1 modification is found at serine 407. 2 positions are modified to N6-acetyllysine; alternate: lysine 420 and lysine 435. Residue lysine 420 forms a Glycyl lysine isopeptide (Lys-Gly) (interchain with G-Cter in ubiquitin); alternate linkage. A Glycyl lysine isopeptide (Lys-Gly) (interchain with G-Cter in SUMO2); alternate cross-link involves residue lysine 435.

As to quaternary structure, homooligomer or heterooligomer; may form homotypic arrays. Dimerization interferes with ubiquitin binding. Component of a ternary complex with PAWR and PRKCZ. Forms a complex with JUB/Ajuba, PRKCZ and TRAF6. Identified in a complex with TRAF6 and CYLD. Identified in a heterotrimeric complex with ubiquitin and ZFAND5, where ZFAND5 and SQSTM1 both interact with the same ubiquitin molecule. Interacts (via LIR motif) with MAP1LC3A and MAP1LC3B, as well as with other ATG8 family members, including GABARAP, GABARAPL1 and GABARAPL2; these interactions are necessary for the recruitment MAP1 LC3 family members to inclusion bodies containing polyubiquitinated protein aggregates and for their degradation by autophagy. Interacts directly with PRKCI and PRKCZ. Interacts with EBI3, LCK, RASA1, NR2F2, NTRK1, NTRK2, NTRK3, NBR1, MAP2K5 and MAPKAPK5. Upon TNF-alpha stimulation, interacts with RIPK1 probably bridging IKBKB to the TNF-R1 complex composed of TNF-R1/TNFRSF1A, TRADD and RIPK1. Interacts with the proteasome subunits PSMD4 and PSMC2. Interacts with TRAF6. Interacts with 'Lys-63'-linked polyubiquitinated MAPT/TAU. Interacts with FHOD3. Interacts with CYLD. Interacts with SESN1. Interacts with SESN2. Interacts with ULK1. Interacts with UBD. Interacts with WDR81; the interaction is direct and regulates the interaction of SQSTM1 with ubiquitinated proteins. Interacts with WDFY3; this interaction is required to recruit WDFY3 to cytoplasmic bodies and to PML bodies. Interacts with LRRC25. Interacts with STING1; leading to relocalization of STING1 to autophagosomes. Interacts (when phosphorylated at Ser-349) with KEAP1; the interaction is direct and inactivates the BCR(KEAP1) complex by sequestering KEAP1 in inclusion bodies, promoting its degradation. Interacts with MOAP1; promoting dissociation of SQSTM1 inclusion bodies that sequester KEAP1. Interacts with GBP1. Interacts with TAX1BP1. Interacts with (ubiquitinated) PEX5; specifically binds PEX5 ubiquitinated at 'Lys-209' in response to reactive oxygen species (ROS). Interacts (via PB1 domain) with TNS2; the interaction leads to sequestration of TNS2 in cytoplasmic aggregates with SQSTM1 and promotes TNS2 ubiquitination and proteasomal degradation. Interacts with IRS1; the interaction is disrupted by the presence of tensin TNS2. Interacts with TRIM5. Interacts with TRIM11 (when ubiquitinated); promoting AIM2 recruitment to autophagosomes and autophagy-dependent degradation of AIM2. Interacts with TRIM13. Interacts with TRIM16. Interacts with TRIM23. Interacts with TRIM50. Interacts with TRIM55. Interacts with ECSIT; this interaction inhibits TLR4 signaling via functional regulation of the TRAF6-ECSIT complex. Interacts with GABRR1, GABRR2 and GABRR3. Interacts with WDR83. Interacts with GRB2. Interacts with USP12; the interaction is independent of USP12 deubiquitinase activity and may be involved in regulation of autophagic flux. Interacts with ASB6. Post-translationally, phosphorylation at Ser-407 by ULK1 destabilizes the UBA dimer interface and increases binding affinity to ubiquitinated proteins. Phosphorylation at Ser-407 also primes for subsequent phosphorylation at Ser-403. Phosphorylation at Ser-403 by CK2 or ULK1 promotes binding to ubiquitinated proteins by increasing the affinity between the UBA domain and polyubiquitin chains. Phosphorylation at Ser-403 by ULK1 is stimulated by SESN2. Phosphorylated at Ser-403 by TBK1, leading to promote relocalization of 'Lys-63'-linked ubiquitinated STING1 to autophagosomes. Phosphorylation at Ser-349 by ULK1 promotes interaction with KEAP1 and inactivation of the BCR(KEAP1) complex, promoting NFE2L2/NRF2 nuclear accumulation and expression of phase II detoxifying enzymes. Phosphorylated in vitro by TTN. In terms of processing, ubiquitinated by UBE2J1 and RNF26 at Lys-435: ubiquitinated SQSTM1 attracts specific vesicle-associated adapters, forming a molecular bridge that restrains cognate vesicles in the perinuclear region and organizes the endosomal pathway for efficient cargo transport. Ubiquitination by UBE2D2 and UBE2D3 increases its ability to bind polyubiquitin chains by destabilizing the UBA dimer interface. Deubiquitination by USP15 releases target vesicles for fast transport into the cell periphery. Ubiquitinated by the BCR(KEAP1) complex at Lys-420, increasing SQSTM1 sequestering activity and promoting its degradation. Ubiquitinated via 'Lys-29' and 'Lys-33'-linked polyubiquitination leading to xenophagic targeting of bacteria and inhibition of their replication. Acetylated at Lys-420 and Lys-435 by KAT5/TIP60, promotes activity by destabilizing the UBA dimer interface and increases binding affinity to ubiquitinated proteins. Deacetylated by HDAC6. Post-translationally, palmitoylation at Cys-289 and Cys-290 by ZDHHC19 is required for efficient autophagic degradation of SQSTM1-cargo complexes by promoting affinity for ATG8 proteins and recruitment of p62 bodies to autophagosomes. Dealmitoylated at Cys-289 and Cys-290 by LYPLA1. In terms of processing, (Microbial infection) Cleaved by S.pyogenes SpeB protease; leading to its degradation. Degradation by SpeB prevents autophagy, promoting to S.pyogenes intracellular replication. (Microbial infection) Deubiquitinated by Epstein-Barr virus BPLF1; leading to inhibition of the recruitment of MAP1LC3A/LC3 to SQSTM1-positive structures. As to expression, ubiquitously expressed.

The protein localises to the cytoplasmic vesicle. Its subcellular location is the autophagosome. It localises to the preautophagosomal structure. The protein resides in the cytoplasm. It is found in the cytosol. The protein localises to the nucleus. Its subcellular location is the PML body. It localises to the late endosome. The protein resides in the lysosome. It is found in the endoplasmic reticulum. The protein localises to the myofibril. Its subcellular location is the sarcomere. Functionally, molecular adapter required for selective macroautophagy (aggrephagy) by acting as a bridge between polyubiquitinated proteins and autophagosomes. Promotes the recruitment of ubiquitinated cargo proteins to autophagosomes via multiple domains that bridge proteins and organelles in different steps. SQSTM1 first mediates the assembly and removal of ubiquitinated proteins by undergoing liquid-liquid phase separation upon binding to ubiquitinated proteins via its UBA domain, leading to the formation of insoluble cytoplasmic inclusions, known as p62 bodies. SQSTM1 then interacts with ATG8 family proteins on autophagosomes via its LIR motif, leading to p62 body recruitment to autophagosomes, followed by autophagic clearance of ubiquitinated proteins. SQSTM1 is itself degraded along with its ubiquitinated cargos. Also required to recruit ubiquitinated proteins to PML bodies in the nucleus. Also involved in autophagy of peroxisomes (pexophagy) in response to reactive oxygen species (ROS) by acting as a bridge between ubiquitinated PEX5 receptor and autophagosomes. Acts as an activator of the NFE2L2/NRF2 pathway via interaction with KEAP1: interaction inactivates the BCR(KEAP1) complex by sequestering the complex in inclusion bodies, promoting nuclear accumulation of NFE2L2/NRF2 and subsequent expression of cytoprotective genes. Promotes relocalization of 'Lys-63'-linked ubiquitinated STING1 to autophagosomes. Involved in endosome organization by retaining vesicles in the perinuclear cloud: following ubiquitination by RNF26, attracts specific vesicle-associated adapters, forming a molecular bridge that restrains cognate vesicles in the perinuclear region and organizes the endosomal pathway for efficient cargo transport. Sequesters tensin TNS2 into cytoplasmic puncta, promoting TNS2 ubiquitination and proteasomal degradation. May regulate the activation of NFKB1 by TNF-alpha, nerve growth factor (NGF) and interleukin-1. May play a role in titin/TTN downstream signaling in muscle cells. Adapter that mediates the interaction between TRAF6 and CYLD. This Homo sapiens (Human) protein is Sequestosome-1.